We begin with the raw amino-acid sequence, 114 residues long: UPF0342 protein NWMN_1737 (114 aa).

This sequence belongs to the UPF0342 family.

The chain is UPF0342 protein NWMN_1737 from Staphylococcus aureus (strain Newman).